Here is a 352-residue protein sequence, read N- to C-terminus: Probable gamma-glutamyl hydrolase 3 (352 aa).

The N-terminal stretch at 1–19 is a signal peptide; that stretch reads MWRFCFFLSLLFFDVSAVK. Positions 49 to 352 constitute a Gamma-glutamyl hydrolase domain; sequence AADPNLNYKP…SGDDEVYIFT (304 aa). Cys166 functions as the Nucleophile in the catalytic mechanism. His279 is a catalytic residue.

Belongs to the peptidase C26 family.

The protein resides in the vacuole. It localises to the secreted. It is found in the extracellular space. Its subcellular location is the cell wall. The catalysed reaction is (6S)-5,6,7,8-tetrahydrofolyl-(gamma-L-Glu)(n) + (n-1) H2O = (6S)-5,6,7,8-tetrahydrofolate + (n-1) L-glutamate. Cleaves the polyglutamate sidechains of folate polyglutamates in the vacuole. Is important for polyglutamyl tail length determination before vacuolar exit. Plays a role on folate stability and intracellular folate content. The protein is Probable gamma-glutamyl hydrolase 3 (GGH3) of Arabidopsis thaliana (Mouse-ear cress).